We begin with the raw amino-acid sequence, 485 residues long: Glutamate--tRNA ligase (485 aa).

A 'HIGH' region motif is present at residues 12-22 (PSPTGEPHVGT). Residues 253–257 (KLSKR) carry the 'KMSKS' region motif. An ATP-binding site is contributed by Lys-256.

This sequence belongs to the class-I aminoacyl-tRNA synthetase family. Glutamate--tRNA ligase type 1 subfamily. Monomer.

The protein resides in the cytoplasm. It carries out the reaction tRNA(Glu) + L-glutamate + ATP = L-glutamyl-tRNA(Glu) + AMP + diphosphate. Functionally, catalyzes the attachment of glutamate to tRNA(Glu) in a two-step reaction: glutamate is first activated by ATP to form Glu-AMP and then transferred to the acceptor end of tRNA(Glu). This chain is Glutamate--tRNA ligase, found in Rhizobium meliloti (strain 1021) (Ensifer meliloti).